The chain runs to 399 residues: Proteinase-activated receptor 2 (399 aa).

Residues 1–25 form the signal peptide; the sequence is MRSLSLAWLLGGITLLAASVSCSRT. Residues 26–38 constitute a propeptide, removed for receptor activation; the sequence is ENLAPGRNNSKGR. An N-linked (GlcNAc...) asparagine glycan is attached at Asn-33. Residues 39 to 73 are Extracellular-facing; it reads SLIGRLETQPPITGKGVPVEPGFSIDEFSASILTG. The helical transmembrane segment at 74–103 threads the bilayer; the sequence is KLTTVFLPVVYIIVFVIGLPSNGMALWIFL. Topologically, residues 104 to 110 are cytoplasmic; that stretch reads FRTKKKH. The chain crosses the membrane as a helical span at residues 111 to 139; the sequence is PAVIYMANLALADLLSVIWFPLKISYHLH. The Extracellular segment spans residues 140-151; it reads GNNWVYGEALCK. Cys-150 and Cys-228 form a disulfide bridge. The helical transmembrane segment at 152 to 179 threads the bilayer; sequence VLIGFFYGNMYCSILFMTCLSVQRYWVI. Over 180–185 the chain is Cytoplasmic; sequence VNPMGH. The chain crosses the membrane as a helical span at residues 186–213; the sequence is PRKKANIAVGVSLAIWLLIFLVTIPLYV. The Extracellular segment spans residues 214-237; that stretch reads MKQTIYIPALNITTCHDVLPEEVL. Asn-224 is a glycosylation site (N-linked (GlcNAc...) asparagine). The helical transmembrane segment at 238 to 271 threads the bilayer; that stretch reads VGDMFNYFLSLAIGVFLFPALLTASAYVLMIKTL. Residues 272–279 lie on the Cytoplasmic side of the membrane; sequence RSSAMDEH. Residues 280–319 form a helical membrane-spanning segment; sequence SEKKRQRAIRLIITVLAMYFICFAPSNLLLVVHYFLIKTQ. Residues 320 to 325 lie on the Extracellular side of the membrane; that stretch reads RQSHVY. The helical transmembrane segment at 326-349 threads the bilayer; sequence ALYLVALCLSTLNSCIDPFVYYFV. Residues 350–399 lie on the Cytoplasmic side of the membrane; it reads SKDFRDHARNALLCRSVRTVNRMQISLSSNKFSRKSGSYSSSSTSVKTSY. A lipid anchor (S-palmitoyl cysteine) is attached at Cys-363.

The protein belongs to the G-protein coupled receptor 1 family. Interacts with TLR4, COPS5 and TMED2. Interacts with GNAQ, GNA11, GNA12, GNA13 and GNA14. A proteolytic cleavage generates a new N-terminus that functions as a tethered ligand. Activating serine proteases include trypsin, mast cell tryptase, coagulation factors VII and Xa, myeloblastin/PRTN3 and membrane-type serine protease 1/ST14. Proposed subsequent cleavage by serine proteases is leading to receptor deactivation and include neutrophil elastase and cathepsin G. At least in part, implicated proteases are also shown to activate the receptor; the glycosylation status of the receptor is thought to contribute to the difference. Post-translationally, N-glycosylated and sialylated. In terms of processing, multiple phosphorylated on serine and threonine residues in the cytoplasmic region upon receptor activation; required for receptor desensitization and recruitment of beta-arrestin. Monoubiquitinated by Cbl at the plasma membrane and in early endosomes; not required for receptor endocytosis but for translocation to late endosomes or lysosomes. Deubiquitination involves Stambp and Usp8; required for lysosomal trafficking and receptor degradation.

Its subcellular location is the cell membrane. In terms of biological role, receptor for trypsin and trypsin-like enzymes coupled to G proteins. Its function is mediated through the activation of several signaling pathways including phospholipase C (PLC), intracellular calcium, mitogen-activated protein kinase (MAPK), I-kappaB kinase/NF-kappaB and Rho. Can also be transactivated by cleaved F2r/Par1. Involved in modulation of inflammatory responses and regulation of innate and adaptive immunity, and acts as a sensor for proteolytic enzymes generated during infection. Generally is promoting inflammation. Can signal synergistically with Tlr4 and probably Tlr2 in inflammatory responses and modulates Tlr3 signaling. Has a protective role in establishing the endothelial barrier; the activity involves coagulation factor X. Regulates endothelial cell barrier integrity during neutrophil extravasation, probably following proteolytic cleavage by PRTN3. Proposed to have a bronchoprotective role in airway epithelium, but also shown to compromise the airway epithelial barrier by interrupting E-cadherin adhesion. Involved in the regulation of vascular tone; activation results in hypotension presumably mediated by vasodilation. Associates with a subset of G proteins alpha subunits such as GNAQ, GNA11, GNA14, GNA12 and GNA13, but probably not with G(o)-alpha, G(i) subunit alpha-1 and G(i) subunit alpha-2. Believed to be a class B receptor which internalizes as a complex with arrestin and traffic with it to endosomal vesicles, presumably as desensitized receptor, for extended periods of time. Mediates inhibition of TNF-alpha stimulated JNK phosphorylation via coupling to GNAQ and GNA11; the function involves dissociation of Ripk1 and Tradd from Tnfr1. Mediates phosphorylation of nuclear factor NF-kappa-B RELA subunit at 'Ser-536'; the function involves Ikbkb and is predominantly independent of G proteins. Involved in cellular migration. Involved in cytoskeletal rearrangement and chemotaxis through beta-arrestin-promoted scaffolds; the function is independent of GNAQ and GNA11 and involves promotion of cofilin dephosphorylation and actin filament severing. Induces redistribution of Cops5 from the plasma membrane to the cytosol and activation of the JNK cascade is mediated by Cops5. Involved in the recruitment of leukocytes to the sites of inflammation and is the major PAR receptor capable of modulating eosinophil function such as pro-inflammatory cytokine secretion, superoxide production and degranulation. During inflammation promotes dendritic cell maturation, trafficking to the lymph nodes and subsequent T-cell activation. Involved in antimicrobial response of innate immune cells; activation enhances phagocytosis of Gram-positive and killing of Gram-negative bacteria. Acts synergistically with interferon-gamma in enhancing antiviral responses. Mediates activation of pro-inflammatory and pro-fibrotic responses in fibroblasts, triggered by coagulation factor Xa (F10). Probably mediates activation of barrier protective signaling responses in endothelial cells, triggered by coagulation factor Xa (F10). The polypeptide is Proteinase-activated receptor 2 (F2rl1) (Mus musculus (Mouse)).